We begin with the raw amino-acid sequence, 308 residues long: Aspartate carbamoyltransferase catalytic subunit (308 aa).

Carbamoyl phosphate-binding residues include Arg55 and Thr56. Lys83 lines the L-aspartate pocket. Positions 105, 133, and 136 each coordinate carbamoyl phosphate. L-aspartate contacts are provided by Arg166 and Arg220. Carbamoyl phosphate contacts are provided by Gly261 and Pro262.

It belongs to the aspartate/ornithine carbamoyltransferase superfamily. ATCase family. In terms of assembly, heterododecamer (2C3:3R2) of six catalytic PyrB chains organized as two trimers (C3), and six regulatory PyrI chains organized as three dimers (R2).

It catalyses the reaction carbamoyl phosphate + L-aspartate = N-carbamoyl-L-aspartate + phosphate + H(+). It participates in pyrimidine metabolism; UMP biosynthesis via de novo pathway; (S)-dihydroorotate from bicarbonate: step 2/3. In terms of biological role, catalyzes the condensation of carbamoyl phosphate and aspartate to form carbamoyl aspartate and inorganic phosphate, the committed step in the de novo pyrimidine nucleotide biosynthesis pathway. The chain is Aspartate carbamoyltransferase catalytic subunit from Chlorobium limicola (strain DSM 245 / NBRC 103803 / 6330).